The primary structure comprises 88 residues: Cytochrome c oxidase subunit 6B2 (88 aa).

The disordered stretch occupies residues 1–21 (MLGVQAQMPAPGQWTTPPFDP). The CHCH domain occupies 29–75 (TRNCYQNFLDYHRCVKTMDRRGKNTQACDYYFRVFHSLCPVSWVQRW). The Cx9C motif motif lies at 32-42 (CYQNFLDYHRC). 2 disulfides stabilise this stretch: Cys-32-Cys-67 and Cys-42-Cys-56. The Cx10C motif motif lies at 56-67 (CDYYFRVFHSLC).

It belongs to the cytochrome c oxidase subunit 6B family. As to quaternary structure, component of the cytochrome c oxidase (complex IV, CIV), a multisubunit enzyme composed of 14 subunits. The complex is composed of a catalytic core of 3 subunits MT-CO1, MT-CO2 and MT-CO3, encoded in the mitochondrial DNA, and 11 supernumerary subunits COX4I, COX5A, COX5B, COX6A, COX6B, COX6C, COX7A, COX7B, COX7C, COX8 and NDUFA4, which are encoded in the nuclear genome. The complex exists as a monomer or a dimer and forms supercomplexes (SCs) in the inner mitochondrial membrane with NADH-ubiquinone oxidoreductase (complex I, CI) and ubiquinol-cytochrome c oxidoreductase (cytochrome b-c1 complex, complex III, CIII), resulting in different assemblies (supercomplex SCI(1)III(2)IV(1) and megacomplex MCI(2)III(2)IV(2)). As to expression, testis specific.

Its subcellular location is the mitochondrion inner membrane. The protein operates within energy metabolism; oxidative phosphorylation. Functionally, component of the cytochrome c oxidase, the last enzyme in the mitochondrial electron transport chain which drives oxidative phosphorylation. The respiratory chain contains 3 multisubunit complexes succinate dehydrogenase (complex II, CII), ubiquinol-cytochrome c oxidoreductase (cytochrome b-c1 complex, complex III, CIII) and cytochrome c oxidase (complex IV, CIV), that cooperate to transfer electrons derived from NADH and succinate to molecular oxygen, creating an electrochemical gradient over the inner membrane that drives transmembrane transport and the ATP synthase. Cytochrome c oxidase is the component of the respiratory chain that catalyzes the reduction of oxygen to water. Electrons originating from reduced cytochrome c in the intermembrane space (IMS) are transferred via the dinuclear copper A center (CU(A)) of subunit 2 and heme A of subunit 1 to the active site in subunit 1, a binuclear center (BNC) formed by heme A3 and copper B (CU(B)). The BNC reduces molecular oxygen to 2 water molecules using 4 electrons from cytochrome c in the IMS and 4 protons from the mitochondrial matrix. This is Cytochrome c oxidase subunit 6B2 (Cox6b2) from Rattus norvegicus (Rat).